A 37-amino-acid chain; its full sequence is Large ribosomal subunit protein bL36 (37 aa).

It belongs to the bacterial ribosomal protein bL36 family.

This chain is Large ribosomal subunit protein bL36, found in Borreliella burgdorferi (strain ATCC 35210 / DSM 4680 / CIP 102532 / B31) (Borrelia burgdorferi).